Here is a 280-residue protein sequence, read N- to C-terminus: Formamidopyrimidine-DNA glycosylase (280 aa).

Pro-2 (schiff-base intermediate with DNA) is an active-site residue. Residue Glu-3 is the Proton donor of the active site. Lys-59 serves as the catalytic Proton donor; for beta-elimination activity. Positions 92 and 111 each coordinate DNA. An FPG-type zinc finger spans residues 239 to 273 (NVYGQTGLPCNRCGTPIVKTKVAQRGTHYCPQCQQ). Catalysis depends on Arg-263, which acts as the Proton donor; for delta-elimination activity.

This sequence belongs to the FPG family. Monomer. The cofactor is Zn(2+).

It catalyses the reaction Hydrolysis of DNA containing ring-opened 7-methylguanine residues, releasing 2,6-diamino-4-hydroxy-5-(N-methyl)formamidopyrimidine.. The enzyme catalyses 2'-deoxyribonucleotide-(2'-deoxyribose 5'-phosphate)-2'-deoxyribonucleotide-DNA = a 3'-end 2'-deoxyribonucleotide-(2,3-dehydro-2,3-deoxyribose 5'-phosphate)-DNA + a 5'-end 5'-phospho-2'-deoxyribonucleoside-DNA + H(+). Its function is as follows. Involved in base excision repair of DNA damaged by oxidation or by mutagenic agents. Acts as a DNA glycosylase that recognizes and removes damaged bases. Has a preference for oxidized purines, such as 7,8-dihydro-8-oxoguanine (8-oxoG). Has AP (apurinic/apyrimidinic) lyase activity and introduces nicks in the DNA strand. Cleaves the DNA backbone by beta-delta elimination to generate a single-strand break at the site of the removed base with both 3'- and 5'-phosphates. The chain is Formamidopyrimidine-DNA glycosylase from Enterococcus faecalis (strain ATCC 700802 / V583).